The primary structure comprises 142 residues: ATP synthase epsilon chain (142 aa).

The protein belongs to the ATPase epsilon chain family. F-type ATPases have 2 components, CF(1) - the catalytic core - and CF(0) - the membrane proton channel. CF(1) has five subunits: alpha(3), beta(3), gamma(1), delta(1), epsilon(1). CF(0) has three main subunits: a, b and c.

The protein resides in the cell inner membrane. Functionally, produces ATP from ADP in the presence of a proton gradient across the membrane. The sequence is that of ATP synthase epsilon chain from Shewanella oneidensis (strain ATCC 700550 / JCM 31522 / CIP 106686 / LMG 19005 / NCIMB 14063 / MR-1).